We begin with the raw amino-acid sequence, 165 residues long: MNLFDIEGLLVADSQGEILYRRVFSKEEEIAAKIAEKAAGDRESISMFYDRIVMCKRLDEVLLIIYSPMDVNEPFVGQVFDEFTAAFIGIVKTPTRERVWKKYDQIVLLVAEFLYEGIVMSGKSDEMLDKLPKRNFEGVDGMKVPRGFASFLHKATKSLSIGSNK.

It belongs to the adaptor complexes small subunit family. Oligomeric complex that consists of at least the alpha, beta, beta', gamma, delta, epsilon and zeta subunits.

Its subcellular location is the cytoplasm. It is found in the golgi apparatus membrane. It localises to the cytoplasmic vesicle. The protein localises to the COPI-coated vesicle membrane. In terms of biological role, the coatomer is a cytosolic protein complex that binds to dilysine motifs and reversibly associates with Golgi non-clathrin-coated vesicles, which further mediate biosynthetic protein transport from the ER, via the Golgi up to the trans Golgi network. Coatomer complex is required for budding from Golgi membranes, and is essential for the retrograde Golgi-to-ER transport of dilysine-tagged proteins. The zeta subunit may be involved in regulating the coat assembly and, hence, the rate of biosynthetic protein transport due to its association-dissociation properties with the coatomer complex. This Encephalitozoon cuniculi (strain GB-M1) (Microsporidian parasite) protein is Coatomer subunit zeta.